The chain runs to 291 residues: Probable cell wall amidase LytH (291 aa).

The signal sequence occupies residues M1–S40. The 65-residue stretch at E41–D105 folds into the SH3b domain. Residues Q118–K140 form a disordered region. The MurNAc-LAA domain maps to I122–K286.

It belongs to the N-acetylmuramoyl-L-alanine amidase 3 family.

The protein resides in the secreted. Probably involved in cell-wall metabolism. This is Probable cell wall amidase LytH (lytH) from Staphylococcus aureus (strain USA300).